The following is a 212-amino-acid chain: Deoxyribose-phosphate aldolase (212 aa).

The active-site Proton donor/acceptor is Asp-89. Lys-151 (schiff-base intermediate with acetaldehyde) is an active-site residue. Lys-180 (proton donor/acceptor) is an active-site residue.

This sequence belongs to the DeoC/FbaB aldolase family. DeoC type 1 subfamily.

It is found in the cytoplasm. It catalyses the reaction 2-deoxy-D-ribose 5-phosphate = D-glyceraldehyde 3-phosphate + acetaldehyde. It participates in carbohydrate degradation; 2-deoxy-D-ribose 1-phosphate degradation; D-glyceraldehyde 3-phosphate and acetaldehyde from 2-deoxy-alpha-D-ribose 1-phosphate: step 2/2. In terms of biological role, catalyzes a reversible aldol reaction between acetaldehyde and D-glyceraldehyde 3-phosphate to generate 2-deoxy-D-ribose 5-phosphate. The polypeptide is Deoxyribose-phosphate aldolase (Clostridium botulinum (strain Kyoto / Type A2)).